Reading from the N-terminus, the 264-residue chain is Undecaprenyl-diphosphatase (264 aa).

Transmembrane regions (helical) follow at residues 34 to 54 (LLNLPIAIAYSFGLFMEMGSI), 75 to 95 (LLYLAIITIITGLVGVPLYII), 104 to 124 (YDPSIPMIILGIALIVDGLYI), 137 to 157 (LSLKNIILIGIAQGLAALPGV), 180 to 200 (YSYLAYIPAAVGAVGTTILFS), 207 to 227 (VISLIGIGGVLISVISAFIIG), and 243 to 263 (IYIIDFTLGGIAIVVSVLTIL).

Belongs to the UppP family.

The protein localises to the cell membrane. It carries out the reaction di-trans,octa-cis-undecaprenyl diphosphate + H2O = di-trans,octa-cis-undecaprenyl phosphate + phosphate + H(+). Catalyzes the dephosphorylation of undecaprenyl diphosphate (UPP). The polypeptide is Undecaprenyl-diphosphatase (Sulfurisphaera tokodaii (strain DSM 16993 / JCM 10545 / NBRC 100140 / 7) (Sulfolobus tokodaii)).